Reading from the N-terminus, the 224-residue chain is UPF0758 protein Nmul_A2138 (224 aa).

Residues alanine 102–isoleucine 224 enclose the MPN domain. The Zn(2+) site is built by histidine 173, histidine 175, and aspartate 186. The short motif at histidine 173 to aspartate 186 is the JAMM motif element.

Belongs to the UPF0758 family.

The sequence is that of UPF0758 protein Nmul_A2138 from Nitrosospira multiformis (strain ATCC 25196 / NCIMB 11849 / C 71).